The sequence spans 134 residues: Profilin-3 (134 aa).

A disulfide bond links C13 and C118. Positions 84–100 (AVIRGKKGSGGITIKKT) match the Involved in PIP2 interaction motif. Position 114 is a phosphothreonine (T114).

It belongs to the profilin family. Occurs in many kinds of cells as a complex with monomeric actin in a 1:1 ratio. In terms of processing, phosphorylated by MAP kinases.

Its subcellular location is the cytoplasm. It is found in the cytoskeleton. Functionally, binds to actin and affects the structure of the cytoskeleton. At high concentrations, profilin prevents the polymerization of actin, whereas it enhances it at low concentrations. In Olea europaea (Common olive), this protein is Profilin-3.